Consider the following 800-residue polypeptide: Ent-copalyl diphosphate synthase 2 (800 aa).

The segment at 52 to 80 is disordered; it reads QGQETRERRQLDDDEHARPPQGGDDDVAA. Basic and acidic residues predominate over residues 55–69; sequence ETRERRQLDDDEHAR. Substrate is bound at residue K242. The Mg(2+) site is built by D374 and D376. Positions 374-377 match the DXDD motif motif; the sequence is DIDD. K461 contacts substrate.

The protein belongs to the terpene synthase family. Mg(2+) serves as cofactor.

The catalysed reaction is (2E,6E,10E)-geranylgeranyl diphosphate = ent-copalyl diphosphate. Functionally, catalyzes the conversion of geranylgeranyl diphosphate to the phytoalexin precursor ent-copalyl diphosphate. The sequence is that of Ent-copalyl diphosphate synthase 2 (CPS2) from Oryza sativa subsp. indica (Rice).